The following is a 135-amino-acid chain: Endoribonuclease YbeY (135 aa).

Residues His-94, His-98, and His-104 each contribute to the Zn(2+) site.

Belongs to the endoribonuclease YbeY family. The cofactor is Zn(2+).

Its subcellular location is the cytoplasm. Single strand-specific metallo-endoribonuclease involved in late-stage 70S ribosome quality control and in maturation of the 3' terminus of the 16S rRNA. The protein is Endoribonuclease YbeY of Campylobacter jejuni subsp. jejuni serotype O:2 (strain ATCC 700819 / NCTC 11168).